We begin with the raw amino-acid sequence, 622 residues long: Low affinity potassium transport system protein Kup (622 aa).

Helical transmembrane passes span 9–29, 49–69, 103–123, 137–157, 165–185, 213–233, 247–267, 276–296, 337–357, 363–383, 396–416, and 419–439; these read LPAI…TSPL, VFGF…IKYL, VIMG…TPAI, PQLD…LFMI, VGKL…GLGL, VSFI…ALYA, WFTV…ALLL, PFFL…AALA, IYIP…IVSF, LAAA…ILST, FVAL…TANL, and LLSG…VMTT.

Belongs to the HAK/KUP transporter (TC 2.A.72) family.

The protein resides in the cell inner membrane. The enzyme catalyses K(+)(in) + H(+)(in) = K(+)(out) + H(+)(out). Responsible for the low-affinity transport of potassium into the cell. Likely operates as a K(+):H(+) symporter. The sequence is that of Low affinity potassium transport system protein Kup from Escherichia fergusonii (strain ATCC 35469 / DSM 13698 / CCUG 18766 / IAM 14443 / JCM 21226 / LMG 7866 / NBRC 102419 / NCTC 12128 / CDC 0568-73).